Consider the following 307-residue polypeptide: Cytochrome c1 1, heme protein, mitochondrial (307 aa).

The transit peptide at 1–64 (MVGGGVIQQI…LLSFSTVASA (64 aa)) directs the protein to the mitochondrion. The Mitochondrial intermembrane segment spans residues 65–270 (DEAEHGLESP…EPEMEERKLM (206 aa)). The Cytochrome c domain occupies 90 to 246 (ASIRRGHQVY…YEDGVPATEA (157 aa)). C103, C106, H107, and M226 together coordinate heme c. The chain crosses the membrane as a helical span at residues 271–288 (GFKWIFLLSLALLQAAYY). Residues 289 to 307 (RRLKWSVLKSRKLVLDVVN) are Mitochondrial matrix-facing.

The protein belongs to the cytochrome c family. As to quaternary structure, component of the ubiquinol-cytochrome c oxidoreductase (cytochrome b-c1 complex, complex III, CIII), a multisubunit enzyme composed of 10 subunits. The complex is composed of 3 respiratory subunits cytochrome b (MT-CYB), cytochrome c1 (CYC1-1 or CYC1-2) and Rieske protein (UCR1-1 or UCR1-2), 2 core protein subunits MPPalpha1 (or MPPalpha2) and MPPB, and 5 low-molecular weight protein subunits QCR7-1 (or QCR7-2), UCRQ-1 (or UCRQ-2), QCR9, UCRY and probably QCR6-1 (or QCR6-2). The complex exists as an obligatory dimer and forms supercomplexes (SCs) in the inner mitochondrial membrane with NADH-ubiquinone oxidoreductase (complex I, CI), resulting in different assemblies (supercomplexes SCI(1)III(2) and SCI(2)III(4)). Post-translationally, binds 1 heme c group covalently per subunit.

The protein resides in the mitochondrion inner membrane. Functionally, component of the ubiquinol-cytochrome c oxidoreductase, a multisubunit transmembrane complex that is part of the mitochondrial electron transport chain which drives oxidative phosphorylation. The respiratory chain contains 3 multisubunit complexes succinate dehydrogenase (complex II, CII), ubiquinol-cytochrome c oxidoreductase (cytochrome b-c1 complex, complex III, CIII) and cytochrome c oxidase (complex IV, CIV), that cooperate to transfer electrons derived from NADH and succinate to molecular oxygen, creating an electrochemical gradient over the inner membrane that drives transmembrane transport and the ATP synthase. The cytochrome b-c1 complex catalyzes electron transfer from ubiquinol to cytochrome c, linking this redox reaction to translocation of protons across the mitochondrial inner membrane, with protons being carried across the membrane as hydrogens on the quinol. In the process called Q cycle, 2 protons are consumed from the matrix, 4 protons are released into the intermembrane space and 2 electrons are passed to cytochrome c. Cytochrome c1 is a catalytic core subunit containing a c-type heme. It transfers electrons from the [2Fe-2S] iron-sulfur cluster of the Rieske protein to cytochrome c. This is Cytochrome c1 1, heme protein, mitochondrial (CYC1-1) from Arabidopsis thaliana (Mouse-ear cress).